Consider the following 693-residue polypeptide: Glycine--tRNA ligase beta subunit (693 aa).

Belongs to the class-II aminoacyl-tRNA synthetase family. In terms of assembly, tetramer of two alpha and two beta subunits.

The protein resides in the cytoplasm. It carries out the reaction tRNA(Gly) + glycine + ATP = glycyl-tRNA(Gly) + AMP + diphosphate. The protein is Glycine--tRNA ligase beta subunit of Vibrio campbellii (strain ATCC BAA-1116).